We begin with the raw amino-acid sequence, 80 residues long: U19-lycotoxin-Ls1a (80 aa).

Positions 1–22 (MSPKVQALIFIVGLITLLAAHA) are cleaved as a signal peptide. A propeptide spanning residues 23–34 (QEELSDNTESER) is cleaved from the precursor. Intrachain disulfides connect Cys-36/Cys-50, Cys-43/Cys-55, Cys-49/Cys-66, and Cys-57/Cys-64.

Belongs to the neurotoxin 02 (plectoxin) family. 05 (U19-lycotoxin) subfamily. As to expression, expressed by the venom gland.

It is found in the secreted. This chain is U19-lycotoxin-Ls1a, found in Lycosa singoriensis (Wolf spider).